Reading from the N-terminus, the 153-residue chain is Endoribonuclease YbeY (153 aa).

Histidine 118, histidine 122, and histidine 128 together coordinate Zn(2+).

Belongs to the endoribonuclease YbeY family. It depends on Zn(2+) as a cofactor.

Its subcellular location is the cytoplasm. Its function is as follows. Single strand-specific metallo-endoribonuclease involved in late-stage 70S ribosome quality control and in maturation of the 3' terminus of the 16S rRNA. This is Endoribonuclease YbeY from Staphylococcus saprophyticus subsp. saprophyticus (strain ATCC 15305 / DSM 20229 / NCIMB 8711 / NCTC 7292 / S-41).